Here is a 147-residue protein sequence, read N- to C-terminus: MSDFYVRYYSGHHGRFGHEFLEFDYHSDGLARYANNSNYRNDSLIRKEMFVSELVLKEVQRIVDDSEIIKESDESWPPENKDGKQELEIRMNGKHIMFETCKLGSLADVQNSDDPEGLKVFYYLIQDLKALCFSLISLNFKLRPVKN.

It belongs to the mago nashi family.

Its subcellular location is the cytoplasm. The protein localises to the nucleus. In Schizosaccharomyces pombe (strain 972 / ATCC 24843) (Fission yeast), this protein is Protein mago nashi homolog (mnh1).